We begin with the raw amino-acid sequence, 249 residues long: Structural protein VP10 (249 aa).

Its subcellular location is the virion. Functionally, forms the virion spike 'foot' and helps anchor the VP9 spike 'head' protein in the virion. This Banna virus (BAV) protein is Structural protein VP10 (Segment-10).